The following is a 480-amino-acid chain: Glutamate--tRNA ligase (480 aa).

The 'HIGH' region motif lies at P21 to G31. Zn(2+) is bound by residues C110, C112, C137, and H139. The 'KMSKS' region signature appears at K248–R252. ATP is bound at residue K251.

It belongs to the class-I aminoacyl-tRNA synthetase family. Glutamate--tRNA ligase type 1 subfamily. As to quaternary structure, monomer. Zn(2+) is required as a cofactor.

The protein localises to the cytoplasm. The enzyme catalyses tRNA(Glu) + L-glutamate + ATP = L-glutamyl-tRNA(Glu) + AMP + diphosphate. Functionally, catalyzes the attachment of glutamate to tRNA(Glu) in a two-step reaction: glutamate is first activated by ATP to form Glu-AMP and then transferred to the acceptor end of tRNA(Glu). The protein is Glutamate--tRNA ligase of Histophilus somni (strain 129Pt) (Haemophilus somnus).